The sequence spans 415 residues: 3-isopropylmalate dehydratase large subunit (415 aa).

Residues Cys-295, Cys-353, and Cys-356 each contribute to the [4Fe-4S] cluster site.

The protein belongs to the aconitase/IPM isomerase family. LeuC type 2 subfamily. As to quaternary structure, heterodimer of LeuC and LeuD. The cofactor is [4Fe-4S] cluster.

The enzyme catalyses (2R,3S)-3-isopropylmalate = (2S)-2-isopropylmalate. It functions in the pathway amino-acid biosynthesis; L-leucine biosynthesis; L-leucine from 3-methyl-2-oxobutanoate: step 2/4. In terms of biological role, catalyzes the isomerization between 2-isopropylmalate and 3-isopropylmalate, via the formation of 2-isopropylmaleate. The sequence is that of 3-isopropylmalate dehydratase large subunit from Pyrobaculum arsenaticum (strain DSM 13514 / JCM 11321 / PZ6).